The sequence spans 262 residues: Methylthioribulose-1-phosphate dehydratase (262 aa).

Cysteine 115 contributes to the substrate binding site. Zn(2+) contacts are provided by histidine 133 and histidine 135. Glutamate 158 (proton donor/acceptor) is an active-site residue. Histidine 223 contributes to the Zn(2+) binding site.

The protein belongs to the aldolase class II family. MtnB subfamily. Requires Zn(2+) as cofactor.

The protein resides in the cytoplasm. It carries out the reaction 5-(methylsulfanyl)-D-ribulose 1-phosphate = 5-methylsulfanyl-2,3-dioxopentyl phosphate + H2O. Its pathway is amino-acid biosynthesis; L-methionine biosynthesis via salvage pathway; L-methionine from S-methyl-5-thio-alpha-D-ribose 1-phosphate: step 2/6. Catalyzes the dehydration of methylthioribulose-1-phosphate (MTRu-1-P) into 2,3-diketo-5-methylthiopentyl-1-phosphate (DK-MTP-1-P). The polypeptide is Methylthioribulose-1-phosphate dehydratase (Meyerozyma guilliermondii (strain ATCC 6260 / CBS 566 / DSM 6381 / JCM 1539 / NBRC 10279 / NRRL Y-324) (Yeast)).